A 423-amino-acid chain; its full sequence is Type II methyltransferase M.NgoBV (423 aa).

One can recognise an SAM-dependent MTase C5-type domain in the interval 4-423; it reads IKFIDLFSGM…AVSERLLHTL (420 aa). Residue Cys-80 is part of the active site.

This sequence belongs to the class I-like SAM-binding methyltransferase superfamily. C5-methyltransferase family.

It carries out the reaction a 2'-deoxycytidine in DNA + S-adenosyl-L-methionine = a 5-methyl-2'-deoxycytidine in DNA + S-adenosyl-L-homocysteine + H(+). Its function is as follows. A methylase, recognizes the double-stranded sequence 5'-GGNNCC-3', methylates C-5 on both strands, and protects the DNA from cleavage by the NgoBV endonuclease. This chain is Type II methyltransferase M.NgoBV (ngoBVM), found in Neisseria gonorrhoeae.